A 685-amino-acid chain; its full sequence is Kinesin-like protein KIP2 (685 aa).

Disordered stretches follow at residues 11–46 and 63–101; these read EHVG…GPAQ and SRPS…SGAS. A compositionally biased stretch (low complexity) spans 86–101; the sequence is GSPQSPDAPSSASGAS. A Kinesin motor domain is found at 113-446; that stretch reads NVSVAIRIKP…VRFASRAKNI (334 aa). An ATP-binding site is contributed by 185–192; it reads GMTGSGKT. Coiled-coil stretches lie at residues 464-486 and 520-663; these read IIQN…RRSA and LEVE…SALS. A disordered region spans residues 485–510; it reads SAAAPSGNGSTSPLDSPGVGGTSLSE.

Belongs to the TRAFAC class myosin-kinesin ATPase superfamily. Kinesin family.

It is found in the cytoplasm. The protein resides in the cytoskeleton. Required for assembly of the mitotic spindle. This is Kinesin-like protein KIP2 (KIP2) from Eremothecium gossypii (strain ATCC 10895 / CBS 109.51 / FGSC 9923 / NRRL Y-1056) (Yeast).